The primary structure comprises 467 residues: Coiled-coil domain-containing protein 71 (467 aa).

The interval 81-105 is disordered; sequence PSQTKLQARAPNPTATSPPASAPRT. Low complexity predominate over residues 88–105; that stretch reads ARAPNPTATSPPASAPRT. A Phosphoserine modification is found at Ser129. Disordered regions lie at residues 211-280 and 349-416; these read KLRK…GTKT and VRAK…KAWL. Over residues 253–265 the composition is skewed to polar residues; it reads GHQSKTNRATGSP. Residues 279-359 are a coiled coil; it reads KTAQAKVART…RAKAKVARTQ (81 aa). Positions 349 to 380 are enriched in basic residues; the sequence is VRAKAKVARTQPRGRGRPKGSAKARTTRKGQK. A compositionally biased stretch (basic and acidic residues) spans 392–401; that stretch reads RAEEAKDLPP.

The chain is Coiled-coil domain-containing protein 71 (CCDC71) from Homo sapiens (Human).